The primary structure comprises 458 residues: tRNA modification GTPase MnmE (458 aa).

(6S)-5-formyl-5,6,7,8-tetrahydrofolate-binding residues include arginine 22, glutamate 84, and arginine 123. The TrmE-type G domain maps to 220 to 379 (GIATAIIGRP…LEKAIADLFF (160 aa)). Asparagine 230 provides a ligand contact to K(+). GTP contacts are provided by residues 230-235 (NVGKSS), 249-255 (TDIAGTT), and 274-277 (DTAG). Residue serine 234 coordinates Mg(2+). 3 residues coordinate K(+): threonine 249, isoleucine 251, and threonine 254. Threonine 255 provides a ligand contact to Mg(2+). Lysine 458 provides a ligand contact to (6S)-5-formyl-5,6,7,8-tetrahydrofolate.

It belongs to the TRAFAC class TrmE-Era-EngA-EngB-Septin-like GTPase superfamily. TrmE GTPase family. In terms of assembly, homodimer. Heterotetramer of two MnmE and two MnmG subunits. K(+) is required as a cofactor.

The protein localises to the cytoplasm. In terms of biological role, exhibits a very high intrinsic GTPase hydrolysis rate. Involved in the addition of a carboxymethylaminomethyl (cmnm) group at the wobble position (U34) of certain tRNAs, forming tRNA-cmnm(5)s(2)U34. This chain is tRNA modification GTPase MnmE, found in Bacillus anthracis.